The primary structure comprises 100 residues: Urease subunit gamma (100 aa).

It belongs to the urease gamma subunit family. As to quaternary structure, heterotrimer of UreA (gamma), UreB (beta) and UreC (alpha) subunits. Three heterotrimers associate to form the active enzyme.

It is found in the cytoplasm. The enzyme catalyses urea + 2 H2O + H(+) = hydrogencarbonate + 2 NH4(+). It participates in nitrogen metabolism; urea degradation; CO(2) and NH(3) from urea (urease route): step 1/1. In Teredinibacter turnerae (strain ATCC 39867 / T7901), this protein is Urease subunit gamma.